A 323-amino-acid chain; its full sequence is tRNA U34 carboxymethyltransferase (323 aa).

Residues K91, W105, K110, G130, D152–S154, I181–E182, M196, Y200, and R315 each bind carboxy-S-adenosyl-L-methionine.

The protein belongs to the class I-like SAM-binding methyltransferase superfamily. CmoB family. In terms of assembly, homotetramer.

It carries out the reaction carboxy-S-adenosyl-L-methionine + 5-hydroxyuridine(34) in tRNA = 5-carboxymethoxyuridine(34) in tRNA + S-adenosyl-L-homocysteine + H(+). In terms of biological role, catalyzes carboxymethyl transfer from carboxy-S-adenosyl-L-methionine (Cx-SAM) to 5-hydroxyuridine (ho5U) to form 5-carboxymethoxyuridine (cmo5U) at position 34 in tRNAs. This Vibrio vulnificus (strain CMCP6) protein is tRNA U34 carboxymethyltransferase.